The following is a 476-amino-acid chain: Bifunctional protein HldE (476 aa).

The ribokinase stretch occupies residues Met-1–Ala-318. ATP is bound at residue Asn-195 to Glu-198. Asp-264 is a catalytic residue. A cytidylyltransferase region spans residues Met-344–Gly-476.

It in the N-terminal section; belongs to the carbohydrate kinase PfkB family. The protein in the C-terminal section; belongs to the cytidylyltransferase family. As to quaternary structure, homodimer.

It carries out the reaction D-glycero-beta-D-manno-heptose 7-phosphate + ATP = D-glycero-beta-D-manno-heptose 1,7-bisphosphate + ADP + H(+). The enzyme catalyses D-glycero-beta-D-manno-heptose 1-phosphate + ATP + H(+) = ADP-D-glycero-beta-D-manno-heptose + diphosphate. It functions in the pathway nucleotide-sugar biosynthesis; ADP-L-glycero-beta-D-manno-heptose biosynthesis; ADP-L-glycero-beta-D-manno-heptose from D-glycero-beta-D-manno-heptose 7-phosphate: step 1/4. The protein operates within nucleotide-sugar biosynthesis; ADP-L-glycero-beta-D-manno-heptose biosynthesis; ADP-L-glycero-beta-D-manno-heptose from D-glycero-beta-D-manno-heptose 7-phosphate: step 3/4. In terms of biological role, catalyzes the phosphorylation of D-glycero-D-manno-heptose 7-phosphate at the C-1 position to selectively form D-glycero-beta-D-manno-heptose-1,7-bisphosphate. Functionally, catalyzes the ADP transfer from ATP to D-glycero-beta-D-manno-heptose 1-phosphate, yielding ADP-D-glycero-beta-D-manno-heptose. The polypeptide is Bifunctional protein HldE (Chromohalobacter salexigens (strain ATCC BAA-138 / DSM 3043 / CIP 106854 / NCIMB 13768 / 1H11)).